A 263-amino-acid polypeptide reads, in one-letter code: Small ribosomal subunit protein eS4 (263 aa).

The S4 RNA-binding domain occupies 42-104 (LPLIIFLRNR…TGENFRLIYD (63 aa)).

This sequence belongs to the eukaryotic ribosomal protein eS4 family.

The protein is Small ribosomal subunit protein eS4 (RPS4) of Cricetulus griseus (Chinese hamster).